Reading from the N-terminus, the 300-residue chain is tRNA-cytidine(32) 2-sulfurtransferase (300 aa).

Residues 57–62 (SGGKDS) carry the PP-loop motif motif. [4Fe-4S] cluster-binding residues include C132, C135, and C223.

This sequence belongs to the TtcA family. Homodimer. The cofactor is Mg(2+). [4Fe-4S] cluster is required as a cofactor.

The protein resides in the cytoplasm. It carries out the reaction cytidine(32) in tRNA + S-sulfanyl-L-cysteinyl-[cysteine desulfurase] + AH2 + ATP = 2-thiocytidine(32) in tRNA + L-cysteinyl-[cysteine desulfurase] + A + AMP + diphosphate + H(+). Its pathway is tRNA modification. Functionally, catalyzes the ATP-dependent 2-thiolation of cytidine in position 32 of tRNA, to form 2-thiocytidine (s(2)C32). The sulfur atoms are provided by the cysteine/cysteine desulfurase (IscS) system. The chain is tRNA-cytidine(32) 2-sulfurtransferase from Xanthomonas campestris pv. campestris (strain B100).